Consider the following 980-residue polypeptide: Putative formate dehydrogenase YrhE (980 aa).

The region spanning 5–81 (KSISVRVDGT…GMSIDLSGNR (77 aa)) is the 2Fe-2S ferredoxin-type domain. Residues Cys39, Cys50, Cys53, and Cys65 each contribute to the [2Fe-2S] cluster site. The 4Fe-4S His(Cys)3-ligated-type domain occupies 81–121 (RVKEAQTEAMDRLLENHLLYCTVCDNNNGNCTLHNTAEMMG). 16 residues coordinate [4Fe-4S] cluster: His97, Cys101, Cys104, Cys111, Cys153, Cys156, Cys159, Cys163, Cys196, Cys199, Cys202, Cys206, Cys270, Cys273, Cys277, and Cys305. 4Fe-4S ferredoxin-type domains follow at residues 144–171 (PFYRYDPNQCIACGQCVEVCQNLQVNET) and 187–216 (EGVPINESSCVSCGQCVTVCPCNALMEKSM). The interval 258–980 (MRETRTKKTK…NRPGYVHLTD (723 aa)) is formate dehydrogenase. Residues 263–319 (TKKTKTVCTFCGVGCSFEVWTKGRDILKIQPVSDAPVNAISTCVKGKFGWDFVNSKE) form the 4Fe-4S Mo/W bis-MGD-type domain. A disordered region spans residues 944 to 980 (ETAPLPKTNPRNKKRHPQNGVEAERKWNRPGYVHLTD).

The protein in the C-terminal section; belongs to the prokaryotic molybdopterin-containing oxidoreductase family. [2Fe-2S] cluster serves as cofactor. Requires [4Fe-4S] cluster as cofactor. It depends on Mo-bis(molybdopterin guanine dinucleotide) as a cofactor.

It carries out the reaction formate + NAD(+) = CO2 + NADH. This Bacillus subtilis (strain 168) protein is Putative formate dehydrogenase YrhE (yrhE).